Consider the following 104-residue polypeptide: Gastrin (104 aa).

Positions M1–A21 are cleaved as a signal peptide. The propeptide occupies S22–R58. The segment at H26–A70 is disordered. Position 87 is a sulfotyrosine (Y87). F92 is subject to Phenylalanine amide. S96 is modified (phosphoserine). Residues S96–P104 constitute a propeptide that is removed on maturation.

It belongs to the gastrin/cholecystokinin family. Sulfation enhances proteolytic processing, and blocks peptide degradation. Levels of sulfation differ between proteolytically-cleaved gastrins and between tissues.

The protein resides in the secreted. Functionally, gastrin stimulates the stomach mucosa to produce and secrete hydrochloric acid and the pancreas to secrete its digestive enzymes. It also stimulates smooth muscle contraction and increases blood circulation and water secretion in the stomach and intestine. This Ovis aries (Sheep) protein is Gastrin (GAST).